The chain runs to 177 residues: Large ribosomal subunit protein uL5c (177 aa).

The protein belongs to the universal ribosomal protein uL5 family. In terms of assembly, part of the 50S ribosomal subunit; contacts the 5S rRNA.

The protein localises to the plastid. It is found in the chloroplast. Functionally, binds 5S rRNA, forms part of the central protuberance of the 50S subunit. In Cyanidioschyzon merolae (strain NIES-3377 / 10D) (Unicellular red alga), this protein is Large ribosomal subunit protein uL5c (rpl5).